Reading from the N-terminus, the 145-residue chain is MKVILLEDIASLGKKNEIIDVSDGYAKNFLIRQKKAVALTNKSQEVLNKDLAILEAQEQQAILDATLLKDKLEQKPLQFFLKTNNLQTFGSISNKQIIDEINKEQKFITKHMITKPHALGIGEHIVEILLHKKVTAKLHVIVSKE.

The protein belongs to the bacterial ribosomal protein bL9 family.

Its function is as follows. Binds to the 23S rRNA. The sequence is that of Large ribosomal subunit protein bL9 from Ureaplasma parvum serovar 3 (strain ATCC 700970).